We begin with the raw amino-acid sequence, 154 residues long: Ribosome maturation factor RimP (154 aa).

It belongs to the RimP family.

Its subcellular location is the cytoplasm. Its function is as follows. Required for maturation of 30S ribosomal subunits. This Haemophilus ducreyi (strain 35000HP / ATCC 700724) protein is Ribosome maturation factor RimP.